Consider the following 446-residue polypeptide: Tubulin beta chain (446 aa).

GTP-binding residues include Gln-11, Glu-69, Ser-138, Gly-142, Thr-143, Gly-144, Asn-204, and Asn-226. Glu-69 contributes to the Mg(2+) binding site. The interval 423–446 (QQYQDATADEEEGEYEEEPAEEEQ) is disordered. Residues 429-446 (TADEEEGEYEEEPAEEEQ) show a composition bias toward acidic residues.

Belongs to the tubulin family. As to quaternary structure, dimer of alpha and beta chains. A typical microtubule is a hollow water-filled tube with an outer diameter of 25 nm and an inner diameter of 15 nM. Alpha-beta heterodimers associate head-to-tail to form protofilaments running lengthwise along the microtubule wall with the beta-tubulin subunit facing the microtubule plus end conferring a structural polarity. Microtubules usually have 13 protofilaments but different protofilament numbers can be found in some organisms and specialized cells. Mg(2+) serves as cofactor.

The protein localises to the cytoplasm. It localises to the cytoskeleton. Its function is as follows. Tubulin is the major constituent of microtubules, a cylinder consisting of laterally associated linear protofilaments composed of alpha- and beta-tubulin heterodimers. Microtubules grow by the addition of GTP-tubulin dimers to the microtubule end, where a stabilizing cap forms. Below the cap, tubulin dimers are in GDP-bound state, owing to GTPase activity of alpha-tubulin. The polypeptide is Tubulin beta chain (Pleurotus sajor-caju (Oyster mushroom)).